The chain runs to 202 residues: UMP-CMP kinase 3 (202 aa).

Residue 24 to 29 coordinates ATP; that stretch reads GSGKGT. The segment at 44–73 is NMP; it reads SAGDLLRAEIKSGSENGTMIQNMIKEGKIV. A ribonucleoside 5'-phosphate contacts are provided by residues arginine 50, 71–73, and 98–101; these read KIV and GFPR. Asparagine 105 is a CMP binding site. Positions 136 to 144 are LID; that stretch reads GRNQGREDD. Residue arginine 137 coordinates ATP. A ribonucleoside 5'-phosphate-binding residues include arginine 141 and arginine 152. Position 180 (lysine 180) interacts with ATP.

In terms of assembly, monomer. Mg(2+) serves as cofactor.

The protein resides in the cytoplasm. The protein localises to the nucleus. It catalyses the reaction CMP + ATP = CDP + ADP. The catalysed reaction is dCMP + ATP = dCDP + ADP. The enzyme catalyses UMP + ATP = UDP + ADP. Functionally, catalyzes the phosphorylation of pyrimidine nucleoside monophosphates at the expense of ATP. Plays an important role in de novo pyrimidine nucleotide biosynthesis. Has preference for UMP and CMP as phosphate acceptors. Does not act on dCMP and dUMP. The protein is UMP-CMP kinase 3 (UMK3) of Arabidopsis thaliana (Mouse-ear cress).